Reading from the N-terminus, the 426-residue chain is UPF0597 protein CLD_2825 (426 aa).

The protein belongs to the UPF0597 family.

The chain is UPF0597 protein CLD_2825 from Clostridium botulinum (strain Okra / Type B1).